The sequence spans 161 residues: TRAF-interacting protein with FHA domain-containing protein B (161 aa).

The FHA domain occupies 36 to 91 (LLLGRGQDAHLQLQLPRLSRRHLSLEPYLEKGSALLAFCLKALSRKGCVWVNGLTL).

In terms of assembly, interacts with TIFA.

Functionally, inhibits TIFA-mediated TRAF6 activation possibly by inducing a conformational change in TIFA. The chain is TRAF-interacting protein with FHA domain-containing protein B from Homo sapiens (Human).